A 141-amino-acid chain; its full sequence is Large ribosomal subunit protein uL11 (141 aa).

This sequence belongs to the universal ribosomal protein uL11 family. As to quaternary structure, part of the ribosomal stalk of the 50S ribosomal subunit. Interacts with L10 and the large rRNA to form the base of the stalk. L10 forms an elongated spine to which L12 dimers bind in a sequential fashion forming a multimeric L10(L12)X complex. Post-translationally, one or more lysine residues are methylated.

In terms of biological role, forms part of the ribosomal stalk which helps the ribosome interact with GTP-bound translation factors. This Limosilactobacillus reuteri (strain DSM 20016) (Lactobacillus reuteri) protein is Large ribosomal subunit protein uL11.